A 277-amino-acid chain; its full sequence is Proteasome subunit beta type-7 (277 aa).

The propeptide at 1–43 is removed in mature form; sequence MAAVSVFQAPVGGFSFDNCRRNAVLEADFAKKGFKLPKARKTG. The active-site Nucleophile is T44.

Belongs to the peptidase T1B family. The 26S proteasome consists of a 20S proteasome core and two 19S regulatory subunits. The 20S proteasome core is a barrel-shaped complex made of 28 subunits that are arranged in four stacked rings. The two outer rings are each formed by seven alpha subunits, and the two inner rings are formed by seven beta subunits. The proteolytic activity is exerted by three beta-subunits PSMB5, PSMB6 and PSMB7.

It is found in the cytoplasm. The protein localises to the nucleus. The enzyme catalyses Cleavage of peptide bonds with very broad specificity.. Its function is as follows. Component of the 20S core proteasome complex involved in the proteolytic degradation of most intracellular proteins. This complex plays numerous essential roles within the cell by associating with different regulatory particles. Associated with two 19S regulatory particles, forms the 26S proteasome and thus participates in the ATP-dependent degradation of ubiquitinated proteins. The 26S proteasome plays a key role in the maintenance of protein homeostasis by removing misfolded or damaged proteins that could impair cellular functions, and by removing proteins whose functions are no longer required. Associated with the PA200 or PA28, the 20S proteasome mediates ubiquitin-independent protein degradation. This type of proteolysis is required in several pathways including spermatogenesis (20S-PA200 complex) or generation of a subset of MHC class I-presented antigenic peptides (20S-PA28 complex). Within the 20S core complex, PSMB7 displays a trypsin-like activity. The protein is Proteasome subunit beta type-7 (Psmb7) of Rattus norvegicus (Rat).